The chain runs to 64 residues: Beta-defensin 1 (64 aa).

The signal sequence occupies residues 1–20 (MRLHHLLLVLFFLVLSAGSG). Positions 21–26 (FTQGIR) are excised as a propeptide. 3 cysteine pairs are disulfide-bonded: Cys-31/Cys-60, Cys-38/Cys-53, and Cys-43/Cys-61.

Belongs to the beta-defensin family. In terms of assembly, monomer. Homodimer.

Its subcellular location is the secreted. It is found in the membrane. Functionally, has bactericidal activity. May act as a ligand for C-C chemokine receptor CCR6. Positively regulates the sperm motility and bactericidal activity in a CCR6-dependent manner. Binds to CCR6 and triggers Ca2+ mobilization in the sperm which is important for its motility. The polypeptide is Beta-defensin 1 (DEFB1) (Capra hircus (Goat)).